The sequence spans 72 residues: DNA-directed RNA polymerase subunit omega (72 aa).

Belongs to the RNA polymerase subunit omega family. The RNAP catalytic core consists of 2 alpha, 1 beta, 1 beta' and 1 omega subunit. When a sigma factor is associated with the core the holoenzyme is formed, which can initiate transcription.

It catalyses the reaction RNA(n) + a ribonucleoside 5'-triphosphate = RNA(n+1) + diphosphate. Its function is as follows. Promotes RNA polymerase assembly. Latches the N- and C-terminal regions of the beta' subunit thereby facilitating its interaction with the beta and alpha subunits. This is DNA-directed RNA polymerase subunit omega from Francisella tularensis subsp. tularensis (strain FSC 198).